The following is a 494-amino-acid chain: Sulfate adenylyltransferase subunit 1 (494 aa).

The tr-type G domain occupies Thr-24 to Gln-240. The tract at residues Gly-33–Ser-40 is G1. Position 33–40 (Gly-33–Ser-40) interacts with GTP. Residues Gly-91–Asp-95 are G2. The segment at Asp-112–Gly-115 is G3. GTP contacts are provided by residues Asp-112–His-116 and Asn-167–Asp-170. The interval Asn-167–Asp-170 is G4. The interval Ser-204–Leu-206 is G5.

Belongs to the TRAFAC class translation factor GTPase superfamily. Classic translation factor GTPase family. CysN/NodQ subfamily. As to quaternary structure, heterodimer composed of CysD, the smaller subunit, and CysN.

It catalyses the reaction sulfate + ATP + H(+) = adenosine 5'-phosphosulfate + diphosphate. It functions in the pathway sulfur metabolism; hydrogen sulfide biosynthesis; sulfite from sulfate: step 1/3. With CysD forms the ATP sulfurylase (ATPS) that catalyzes the adenylation of sulfate producing adenosine 5'-phosphosulfate (APS) and diphosphate, the first enzymatic step in sulfur assimilation pathway. APS synthesis involves the formation of a high-energy phosphoric-sulfuric acid anhydride bond driven by GTP hydrolysis by CysN coupled to ATP hydrolysis by CysD. The protein is Sulfate adenylyltransferase subunit 1 of Rhizobium tropici.